Consider the following 232-residue polypeptide: Orotidine 5'-phosphate decarboxylase (232 aa).

Substrate is bound by residues Asp-13, Lys-35, 62–71 (DLKFHDIPNT), Thr-122, Arg-182, Gln-191, Gly-211, and Arg-212. Catalysis depends on Lys-64, which acts as the Proton donor.

Belongs to the OMP decarboxylase family. Type 1 subfamily. As to quaternary structure, homodimer.

It carries out the reaction orotidine 5'-phosphate + H(+) = UMP + CO2. It functions in the pathway pyrimidine metabolism; UMP biosynthesis via de novo pathway; UMP from orotate: step 2/2. Its function is as follows. Catalyzes the decarboxylation of orotidine 5'-monophosphate (OMP) to uridine 5'-monophosphate (UMP). The protein is Orotidine 5'-phosphate decarboxylase of Pseudomonas fluorescens (strain Pf0-1).